The sequence spans 487 residues: Glutamate--tRNA ligase (487 aa).

The 'HIGH' region signature appears at Pro10–Asn20. A 'KMSKS' region motif is present at residues Lys251–Arg255. An ATP-binding site is contributed by Lys254.

The protein belongs to the class-I aminoacyl-tRNA synthetase family. Glutamate--tRNA ligase type 1 subfamily. In terms of assembly, monomer.

It localises to the cytoplasm. It catalyses the reaction tRNA(Glu) + L-glutamate + ATP = L-glutamyl-tRNA(Glu) + AMP + diphosphate. Its function is as follows. Catalyzes the attachment of glutamate to tRNA(Glu) in a two-step reaction: glutamate is first activated by ATP to form Glu-AMP and then transferred to the acceptor end of tRNA(Glu). In Clostridium kluyveri (strain ATCC 8527 / DSM 555 / NBRC 12016 / NCIMB 10680 / K1), this protein is Glutamate--tRNA ligase.